A 277-amino-acid chain; its full sequence is 2,5-diketo-D-gluconic acid reductase B (277 aa).

Tyr-51 (proton donor) is an active-site residue. His-109 serves as a coordination point for substrate. Residue 189–242 (SPLARRSELLTEQLLQELAVVYGVTPTQVVLRWHVQLGSTPIPKSADPDRQREN) participates in NADP(+) binding.

It belongs to the aldo/keto reductase family.

The protein resides in the cytoplasm. The catalysed reaction is 2-dehydro-D-gluconate + NADP(+) = 2,5-didehydro-D-gluconate + NADPH + H(+). In terms of biological role, catalyzes the reduction of 2,5-diketo-D-gluconic acid (25DKG) to 2-keto-L-gulonic acid (2KLG). 25DKGR-B has higher catalytic efficiency than 25DKGR-A. The sequence is that of 2,5-diketo-D-gluconic acid reductase B (dkgB) from Corynebacterium sp. (strain SHS752001).